Consider the following 334-residue polypeptide: MKTLGEFIIEKQAEYPEAKGELSGILASIRLAAKIIHREINRAGLSQDILGFAGSENVQGETQMKLDIFANETMKKALLAREDVAGFASEEDDNFIAFDSERNRNAKYILMTDPLDGSSNIDVNVSVGTIFSIYKRISPIGSPVTIEDFLQEGRKQVAAGYVTYGSSTMLVYTTGNGVNGFTYDPSLGLFILSHPDMKMPAEGKYYSINEGQYVTFPLGVKKFIKYCQENDEASKRPYSSRYIGSLVSDFHRNLLKGGIYIYPTSTVYPQGKLRLLYEGNPMAFLAEQADGMATDGFQPILDIKPTELHQRVPFFIGSKTMVKQANTFMQTFTE.

The Mg(2+) site is built by glutamate 90, aspartate 113, leucine 115, and aspartate 116. Residues 116–119 (DGSS), asparagine 209, tyrosine 242, and lysine 272 contribute to the substrate site. A Mg(2+)-binding site is contributed by glutamate 278.

The protein belongs to the FBPase class 1 family. Homotetramer. Mg(2+) serves as cofactor.

Its subcellular location is the cytoplasm. The catalysed reaction is beta-D-fructose 1,6-bisphosphate + H2O = beta-D-fructose 6-phosphate + phosphate. It participates in carbohydrate biosynthesis; gluconeogenesis. This chain is Fructose-1,6-bisphosphatase class 1, found in Haemophilus ducreyi (strain 35000HP / ATCC 700724).